The chain runs to 351 residues: MMKLRVLTLGILIILLITACSAPTPTTPAAAPTAAPAPNAQPTLQQVTLAMSYIPNIQFAPYYVAAAKGYYAAEGIEVVFDYNFENDVLQRAATWPTSGVAFATTSGTSVLLARQQGLPVKTVMTLYQRFPIAFFAKSNVPLASVNDLRGQTIGIPGRFGESFYALLAALYAGGMSEADVTVQEIGFTQTAAVMEDKVPVAIGYAMNEPVQLRGQGVEVNVLLAADVFNLAANGIAVSEALIAQNPELVRKFVRASLRGLADTLANPDEAFDLSLQFIPEAQLGDLSLQRQVLQESLPFWQNELTAQYGLGYTDGQLWTRTEEFMRAAGLLSAPVDVQQAFTNEFVPGGSY.

The N-terminal stretch at 1-19 (MMKLRVLTLGILIILLITA) is a signal peptide. A lipid anchor (N-palmitoyl cysteine) is attached at C20. Residue C20 is the site of S-diacylglycerol cysteine attachment.

This sequence belongs to the NMT1 family. In terms of assembly, the complex is likely composed of an ATP-binding protein, a transmembrane protein (RibX) and a solute-binding protein (RibY).

Its subcellular location is the cell membrane. Its function is as follows. Part of an ABC transporter complex that transports riboflavin into the cell. Binds riboflavin. The chain is Riboflavin-binding protein RibY from Chloroflexus aurantiacus (strain ATCC 29366 / DSM 635 / J-10-fl).